The following is a 395-amino-acid chain: Enoyl-[acyl-carrier-protein] reductase [NADH] (395 aa).

NAD(+) is bound by residues Gly-48–Tyr-53, Phe-74–Glu-75, Asp-111–Ala-112, and Leu-139–Ala-140. Tyr-225 contacts substrate. Catalysis depends on Tyr-235, which acts as the Proton donor. NAD(+) contacts are provided by residues Lys-244 and Leu-273 to Thr-275.

The protein belongs to the TER reductase family. As to quaternary structure, monomer.

The catalysed reaction is a 2,3-saturated acyl-[ACP] + NAD(+) = a (2E)-enoyl-[ACP] + NADH + H(+). Its pathway is lipid metabolism; fatty acid biosynthesis. Involved in the final reduction of the elongation cycle of fatty acid synthesis (FAS II). Catalyzes the reduction of a carbon-carbon double bond in an enoyl moiety that is covalently linked to an acyl carrier protein (ACP). This Saccharophagus degradans (strain 2-40 / ATCC 43961 / DSM 17024) protein is Enoyl-[acyl-carrier-protein] reductase [NADH].